Here is a 373-residue protein sequence, read N- to C-terminus: Cell division protein FtsZ 1 (373 aa).

GTP contacts are provided by residues 51 to 55, 138 to 140, Glu-169, Arg-173, and Asp-216; these read GAGCN and GTG. A disordered region spans residues 354–373; sequence EESYFGEEERRPIKLDLDEL. The segment covering 360–373 has biased composition (basic and acidic residues); that stretch reads EEERRPIKLDLDEL.

It belongs to the FtsZ family. Homodimer. Polymerizes to form a dynamic ring structure in a strictly GTP-dependent manner. Interacts directly with several other division proteins.

It is found in the cytoplasm. Functionally, essential cell division protein that forms a contractile ring structure (Z ring) at the future cell division site. The regulation of the ring assembly controls the timing and the location of cell division. One of the functions of the FtsZ ring is to recruit other cell division proteins to the septum to produce a new cell wall between the dividing cells. Binds GTP and shows GTPase activity. The chain is Cell division protein FtsZ 1 from Thermococcus kodakarensis (strain ATCC BAA-918 / JCM 12380 / KOD1) (Pyrococcus kodakaraensis (strain KOD1)).